The sequence spans 388 residues: Succinate--CoA ligase [ADP-forming] subunit beta (388 aa).

An ATP-grasp domain is found at 9–244; that stretch reads KQLFAEYGLP…PSQDDAREAH (236 aa). ATP is bound by residues Lys-46, 53–55, Glu-99, Thr-102, and Glu-107; that span reads GRG. The Mg(2+) site is built by Asn-199 and Asp-213. Substrate-binding positions include Asn-264 and 321 to 323; that span reads GIV.

Belongs to the succinate/malate CoA ligase beta subunit family. As to quaternary structure, heterotetramer of two alpha and two beta subunits. It depends on Mg(2+) as a cofactor.

The catalysed reaction is succinate + ATP + CoA = succinyl-CoA + ADP + phosphate. It catalyses the reaction GTP + succinate + CoA = succinyl-CoA + GDP + phosphate. The protein operates within carbohydrate metabolism; tricarboxylic acid cycle; succinate from succinyl-CoA (ligase route): step 1/1. Functionally, succinyl-CoA synthetase functions in the citric acid cycle (TCA), coupling the hydrolysis of succinyl-CoA to the synthesis of either ATP or GTP and thus represents the only step of substrate-level phosphorylation in the TCA. The beta subunit provides nucleotide specificity of the enzyme and binds the substrate succinate, while the binding sites for coenzyme A and phosphate are found in the alpha subunit. This chain is Succinate--CoA ligase [ADP-forming] subunit beta, found in Pseudomonas paraeruginosa (strain DSM 24068 / PA7) (Pseudomonas aeruginosa (strain PA7)).